Consider the following 431-residue polypeptide: Glutamate-1-semialdehyde 2,1-aminomutase (431 aa).

An N6-(pyridoxal phosphate)lysine modification is found at Lys269.

Belongs to the class-III pyridoxal-phosphate-dependent aminotransferase family. HemL subfamily. In terms of assembly, homodimer. Pyridoxal 5'-phosphate is required as a cofactor.

Its subcellular location is the cytoplasm. It carries out the reaction (S)-4-amino-5-oxopentanoate = 5-aminolevulinate. The protein operates within porphyrin-containing compound metabolism; protoporphyrin-IX biosynthesis; 5-aminolevulinate from L-glutamyl-tRNA(Glu): step 2/2. It functions in the pathway porphyrin-containing compound metabolism; chlorophyll biosynthesis. This Chlorobium limicola (strain DSM 245 / NBRC 103803 / 6330) protein is Glutamate-1-semialdehyde 2,1-aminomutase.